Consider the following 577-residue polypeptide: Pentatricopeptide repeat-containing protein At2g01390 (577 aa).

PPR repeat units lie at residues 121 to 155, 156 to 190, 191 to 225, 226 to 260, 261 to 295, 382 to 416, 417 to 451, 452 to 482, 485 to 519, and 520 to 554; these read DHFTYTTMLDIFGEAGRIQSMYSVFHLMKEKGVLI, DTVTYTSLIHWVSSSGDVDGAMRLWEEMRDNGCEP, TVVSYTAYMKMLFADGRVEEATEVYKEMLRSRVSP, NCHTYTVLMEYLVATGKCEEALDIFFKMQEIGVQP, DKAACNILIAKALKFGETSFMTRVLVYMKENGVVL, DSFVVSAIIETNCDRCRTEGASLAFDYSLEMGIHL, KKSAYLALIGNFLRSNELPKVIEVVKEMVKAQHSL, GCYQGAMLIHRLGFGRRPRLAADVFDLLPDD, GVAAYTALMDVYISAGSPEKAMKILREMREREIMP, and SLGTYDVLLSGLEKTSDFQKEVALLRKEKKSLVAS.

It belongs to the PPR family. P subfamily.

This chain is Pentatricopeptide repeat-containing protein At2g01390, found in Arabidopsis thaliana (Mouse-ear cress).